The chain runs to 419 residues: tRNA modification GTPase MnmE (419 aa).

3 residues coordinate (6S)-5-formyl-5,6,7,8-tetrahydrofolate: arginine 2, glutamate 59, and arginine 99. In terms of domain architecture, TrmE-type G spans 197 to 343 (GLSVVIAGPP…LHTMIVEMAR (147 aa)). Asparagine 207 serves as a coordination point for K(+). GTP-binding positions include 207–212 (NAGKST), 226–232 (SPVAGTT), and 251–254 (DTAG). Position 211 (serine 211) interacts with Mg(2+). Residues serine 226, valine 228, and threonine 231 each contribute to the K(+) site. Threonine 232 is a binding site for Mg(2+). Residue lysine 419 participates in (6S)-5-formyl-5,6,7,8-tetrahydrofolate binding.

Belongs to the TRAFAC class TrmE-Era-EngA-EngB-Septin-like GTPase superfamily. TrmE GTPase family. Homodimer. Heterotetramer of two MnmE and two MnmG subunits. It depends on K(+) as a cofactor.

Its subcellular location is the cytoplasm. In terms of biological role, exhibits a very high intrinsic GTPase hydrolysis rate. Involved in the addition of a carboxymethylaminomethyl (cmnm) group at the wobble position (U34) of certain tRNAs, forming tRNA-cmnm(5)s(2)U34. The sequence is that of tRNA modification GTPase MnmE from Sphingopyxis alaskensis (strain DSM 13593 / LMG 18877 / RB2256) (Sphingomonas alaskensis).